The following is a 173-amino-acid chain: Insertion element IS1397 uncharacterized 20.1 kDa protein (173 aa).

Positions 115-135 (KSMTRSDDTHENEANMTPEEM) are disordered.

The protein belongs to the IS150/IS1296 orfA family.

In Escherichia coli, this protein is Insertion element IS1397 uncharacterized 20.1 kDa protein.